Reading from the N-terminus, the 394-residue chain is S-adenosylmethionine synthase (394 aa).

ATP is bound at residue histidine 16. Residue aspartate 18 participates in Mg(2+) binding. A K(+)-binding site is contributed by glutamate 44. L-methionine-binding residues include glutamate 57 and glutamine 99. Residues glutamine 99–glutamate 109 form a flexible loop region. Residues aspartate 173–lysine 175, arginine 240–phenylalanine 241, aspartate 249, arginine 255–lysine 256, alanine 272, and lysine 276 each bind ATP. Aspartate 249 is an L-methionine binding site. Lysine 280 contacts L-methionine.

The protein belongs to the AdoMet synthase family. In terms of assembly, homotetramer; dimer of dimers. Mg(2+) is required as a cofactor. The cofactor is K(+).

Its subcellular location is the cytoplasm. It catalyses the reaction L-methionine + ATP + H2O = S-adenosyl-L-methionine + phosphate + diphosphate. Its pathway is amino-acid biosynthesis; S-adenosyl-L-methionine biosynthesis; S-adenosyl-L-methionine from L-methionine: step 1/1. Functionally, catalyzes the formation of S-adenosylmethionine (AdoMet) from methionine and ATP. The overall synthetic reaction is composed of two sequential steps, AdoMet formation and the subsequent tripolyphosphate hydrolysis which occurs prior to release of AdoMet from the enzyme. The protein is S-adenosylmethionine synthase of Lacticaseibacillus paracasei (strain ATCC 334 / BCRC 17002 / CCUG 31169 / CIP 107868 / KCTC 3260 / NRRL B-441) (Lactobacillus paracasei).